Reading from the N-terminus, the 181-residue chain is ADP-ribosylation factor 2 (181 aa).

The N-myristoyl glycine moiety is linked to residue glycine 2. GTP is bound by residues 24-31 (GLDAAGKT), 67-71 (DVGGQ), and 126-129 (NKQD).

The protein belongs to the small GTPase superfamily. Arf family.

Its subcellular location is the golgi apparatus. In terms of biological role, GTP-binding protein that functions as an allosteric activator of the cholera toxin catalytic subunit, an ADP-ribosyltransferase. Involved in protein trafficking; may modulate vesicle budding and uncoating within the Golgi apparatus. This is ADP-ribosylation factor 2 (ARF2) from Bos taurus (Bovine).